A 615-amino-acid chain; its full sequence is MCSEARLARRLRDALREEEPWAVEELLRCGADPNLVLEDGAAAVHLAAGARHPRGLRCLGALLRQGGDPNARSVEALTPLHVAAAWGCRRGLELLLSQGADPALRDQDGLRPLDLALQQGHLECARVLQDLDTRTRTRTRIGAETQEPEPAPGTPGLSGPTDETLDSIALQKQPCRGDNRDIGLEADPGPPSLPVPLETVDKHGSSASPPGHWDYSSDASFVTAVEVSGAEDPASDTPPWAGSLPPTRQGLLHVVHANQRVPRSQGTEAELNARLQALTLTPPNAAGFQSSPSSMPLLDRSPAHSPPRTPTPGASDCHCLWEHQTSIDSDMATLWLTEDEASSTGGREPVGPCRHLPVSTVSDLELLKGLRALGENPHPITPFTRQLYHQQLEEAQIAPGPEFSGHSLELAAALRTGCIPDVQADEDALAQQFEQPDPARRWREGVVKSSFTYLLLDPRETQDLPARAFSLTPAERLQTFIRAIFYVGKGTRARPYVHLWEALGHHGRSRKQPHQACPKVRQILDIWASGCGVVSLHCFQHVVAVEAYTREACIVEALGIQTLTNQKQGHCYGVVAGWPPARRRRLGVHLLHRALLVFLAEGERQLHPQDIQARG.

ANK repeat units follow at residues 39 to 71 (DGAA…DPNA), 75 to 104 (EALT…DPAL), and 108 to 137 (DGLR…RTRT). A disordered region spans residues 138–210 (RTRIGAETQE…DKHGSSASPP (73 aa)). The short motif at 271–280 (LNARLQALTL) is the Nuclear export signal element. Residues 283 to 294 (PNAAGFQSSPSS) are compositionally biased toward polar residues. The interval 283-315 (PNAAGFQSSPSSMPLLDRSPAHSPPRTPTPGAS) is disordered. Positions 355–399 (HLPVSTVSDLELLKGLRALGENPHPITPFTRQLYHQQLEEAQIAP) constitute an LEM domain. The GIY-YIG domain occupies 448-566 (KSSFTYLLLD…ALGIQTLTNQ (119 aa)). The short motif at 579-586 (PPARRRRL) is the Nuclear localization signal element.

In terms of assembly, interacts (via LEM domain) with BANF1; the interaction may favor BANF1 dimerization. Expression is predominant in adult bone marrow.

It is found in the cytoplasm. The protein localises to the nucleus. In terms of biological role, endonuclease that probably plays a role in the DNA damage response and DNA repair. The sequence is that of Ankyrin repeat and LEM domain-containing protein 1 (ANKLE1) from Homo sapiens (Human).